The primary structure comprises 427 residues: Gamma-glutamyl phosphate reductase (427 aa).

It belongs to the gamma-glutamyl phosphate reductase family.

It is found in the cytoplasm. It carries out the reaction L-glutamate 5-semialdehyde + phosphate + NADP(+) = L-glutamyl 5-phosphate + NADPH + H(+). Its pathway is amino-acid biosynthesis; L-proline biosynthesis; L-glutamate 5-semialdehyde from L-glutamate: step 2/2. Catalyzes the NADPH-dependent reduction of L-glutamate 5-phosphate into L-glutamate 5-semialdehyde and phosphate. The product spontaneously undergoes cyclization to form 1-pyrroline-5-carboxylate. This is Gamma-glutamyl phosphate reductase from Sinorhizobium medicae (strain WSM419) (Ensifer medicae).